Reading from the N-terminus, the 177-residue chain is Adenine phosphoribosyltransferase (177 aa).

It belongs to the purine/pyrimidine phosphoribosyltransferase family. In terms of assembly, homodimer.

The protein localises to the cytoplasm. It catalyses the reaction AMP + diphosphate = 5-phospho-alpha-D-ribose 1-diphosphate + adenine. The protein operates within purine metabolism; AMP biosynthesis via salvage pathway; AMP from adenine: step 1/1. Functionally, catalyzes a salvage reaction resulting in the formation of AMP, that is energically less costly than de novo synthesis. The sequence is that of Adenine phosphoribosyltransferase from Leptospira borgpetersenii serovar Hardjo-bovis (strain JB197).